Here is a 1014-residue protein sequence, read N- to C-terminus: Beta-galactosidase (1014 aa).

Residue E460 is the Proton donor of the active site. E527 functions as the Nucleophile in the catalytic mechanism.

Belongs to the glycosyl hydrolase 2 family.

It catalyses the reaction Hydrolysis of terminal non-reducing beta-D-galactose residues in beta-D-galactosides.. This chain is Beta-galactosidase (lacZ), found in Halalkalibacterium halodurans (strain ATCC BAA-125 / DSM 18197 / FERM 7344 / JCM 9153 / C-125) (Bacillus halodurans).